The primary structure comprises 630 residues: 1-deoxy-D-xylulose-5-phosphate synthase (630 aa).

Residues H72 and 113–115 (GHS) each bind thiamine diphosphate. A Mg(2+)-binding site is contributed by D144. Residues 145–146 (GA), N173, Y284, and E367 each bind thiamine diphosphate. Residue N173 participates in Mg(2+) binding.

This sequence belongs to the transketolase family. DXPS subfamily. As to quaternary structure, homodimer. Mg(2+) serves as cofactor. Thiamine diphosphate is required as a cofactor.

It carries out the reaction D-glyceraldehyde 3-phosphate + pyruvate + H(+) = 1-deoxy-D-xylulose 5-phosphate + CO2. Its pathway is metabolic intermediate biosynthesis; 1-deoxy-D-xylulose 5-phosphate biosynthesis; 1-deoxy-D-xylulose 5-phosphate from D-glyceraldehyde 3-phosphate and pyruvate: step 1/1. In terms of biological role, catalyzes the acyloin condensation reaction between C atoms 2 and 3 of pyruvate and glyceraldehyde 3-phosphate to yield 1-deoxy-D-xylulose-5-phosphate (DXP). This Geobacillus thermodenitrificans (strain NG80-2) protein is 1-deoxy-D-xylulose-5-phosphate synthase.